Here is a 395-residue protein sequence, read N- to C-terminus: MQKMVILGATGSIGASTLSVIEQNPEAYKAFALVAHKSVDKMLDLCIKYNPSIAHMVDPQAAAELQRRLPAHMAIAVSSGEDELAAIVALPEVDCVMAAIVGAAGLPATLAAVKAGKRVLLANKESLVMSGRLFIDAMQGSNAKVLPVDSEHNAIFQCLPEPAQQAIGACDLAGAGISHILLTGSGGPFLTSDLDSLSQMTPDQACKHPNWSMGRKISVDSASMMNKGLEYIEARWLFNATKEQLKVVVHPQSVIHSMVQYKDGSVLAQMGNPDMRTPIAHCMAYPQRISAGVEPLDFFKVGQLSFLEPDFNRFPCLKLAIDACEQGQEATTVLNAANEVSVEAFLAGLIRFTDIARVNEYCLSHVEQRSLDTIEDILALDGLARRAAQERVAKL.

Residues T10, G11, S12, I13, K37, and N123 each contribute to the NADPH site. K124 is a 1-deoxy-D-xylulose 5-phosphate binding site. E125 contributes to the NADPH binding site. D149 contributes to the Mn(2+) binding site. 1-deoxy-D-xylulose 5-phosphate contacts are provided by S150, E151, S185, and H208. E151 contacts Mn(2+). NADPH is bound at residue G214. Residues S221, N226, K227, and E230 each coordinate 1-deoxy-D-xylulose 5-phosphate. E230 serves as a coordination point for Mn(2+).

Belongs to the DXR family. Requires Mg(2+) as cofactor. Mn(2+) is required as a cofactor.

The catalysed reaction is 2-C-methyl-D-erythritol 4-phosphate + NADP(+) = 1-deoxy-D-xylulose 5-phosphate + NADPH + H(+). It functions in the pathway isoprenoid biosynthesis; isopentenyl diphosphate biosynthesis via DXP pathway; isopentenyl diphosphate from 1-deoxy-D-xylulose 5-phosphate: step 1/6. In terms of biological role, catalyzes the NADPH-dependent rearrangement and reduction of 1-deoxy-D-xylulose-5-phosphate (DXP) to 2-C-methyl-D-erythritol 4-phosphate (MEP). This Shewanella loihica (strain ATCC BAA-1088 / PV-4) protein is 1-deoxy-D-xylulose 5-phosphate reductoisomerase.